The sequence spans 146 residues: Cytochrome c-type biogenesis protein CcmE (146 aa).

The Cytoplasmic segment spans residues 1 to 8 (MNPRRKKR). Residues 9–29 (LGLILALVLGASATVGLMLYA) traverse the membrane as a helical; Signal-anchor for type II membrane protein segment. Residues 30-146 (LNQNMDLFYT…EVAEAMKKTH (117 aa)) lie on the Periplasmic side of the membrane. Residues histidine 129 and tyrosine 133 each coordinate heme.

This sequence belongs to the CcmE/CycJ family.

It is found in the cell inner membrane. In terms of biological role, heme chaperone required for the biogenesis of c-type cytochromes. Transiently binds heme delivered by CcmC and transfers the heme to apo-cytochromes in a process facilitated by CcmF and CcmH. The sequence is that of Cytochrome c-type biogenesis protein CcmE from Aliivibrio salmonicida (strain LFI1238) (Vibrio salmonicida (strain LFI1238)).